The sequence spans 477 residues: Proline--tRNA ligase (477 aa).

The protein belongs to the class-II aminoacyl-tRNA synthetase family. ProS type 3 subfamily. Homodimer.

The protein localises to the cytoplasm. It carries out the reaction tRNA(Pro) + L-proline + ATP = L-prolyl-tRNA(Pro) + AMP + diphosphate. In terms of biological role, catalyzes the attachment of proline to tRNA(Pro) in a two-step reaction: proline is first activated by ATP to form Pro-AMP and then transferred to the acceptor end of tRNA(Pro). The chain is Proline--tRNA ligase from Methanoculleus marisnigri (strain ATCC 35101 / DSM 1498 / JR1).